A 614-amino-acid chain; its full sequence is Sulfite reductase [NADPH] flavoprotein alpha-component (614 aa).

Residues Leu-79–Leu-217 enclose the Flavodoxin-like domain. FMN is bound by residues Ser-85 to Ala-90, Ser-132 to Gly-135, and Leu-168 to Cys-177. The FAD-binding FR-type domain maps to Glu-249–Pro-463. FAD is bound by residues Thr-337, Thr-371, Arg-401–Ser-404, Thr-419–Gly-421, Tyr-425, and Gly-434–Ser-437. NADP(+) contacts are provided by residues Ser-534–Arg-535, Lys-540–Gln-544, and Asp-576. Tyr-614 is an FAD binding site.

It belongs to the NADPH-dependent sulphite reductase flavoprotein subunit CysJ family. This sequence in the N-terminal section; belongs to the flavodoxin family. The protein in the C-terminal section; belongs to the flavoprotein pyridine nucleotide cytochrome reductase family. Alpha(8)-beta(8). The alpha component is a flavoprotein, the beta component is a hemoprotein. The cofactor is FAD. It depends on FMN as a cofactor.

The enzyme catalyses hydrogen sulfide + 3 NADP(+) + 3 H2O = sulfite + 3 NADPH + 4 H(+). It participates in sulfur metabolism; hydrogen sulfide biosynthesis; hydrogen sulfide from sulfite (NADPH route): step 1/1. Its function is as follows. Component of the sulfite reductase complex that catalyzes the 6-electron reduction of sulfite to sulfide. This is one of several activities required for the biosynthesis of L-cysteine from sulfate. The flavoprotein component catalyzes the electron flow from NADPH -&gt; FAD -&gt; FMN to the hemoprotein component. The protein is Sulfite reductase [NADPH] flavoprotein alpha-component of Vibrio cholerae serotype O1 (strain ATCC 39541 / Classical Ogawa 395 / O395).